Reading from the N-terminus, the 435-residue chain is Phosphomethylpyrimidine synthase (435 aa).

Substrate contacts are provided by residues Asn-67, Met-96, Tyr-125, His-163, 185–187 (SRG), 226–229 (DGLR), and Glu-265. Position 269 (His-269) interacts with Zn(2+). Tyr-292 contributes to the substrate binding site. His-333 contacts Zn(2+). The [4Fe-4S] cluster site is built by Cys-408, Cys-411, and Cys-415.

It belongs to the ThiC family. Requires [4Fe-4S] cluster as cofactor.

The catalysed reaction is 5-amino-1-(5-phospho-beta-D-ribosyl)imidazole + S-adenosyl-L-methionine = 4-amino-2-methyl-5-(phosphooxymethyl)pyrimidine + CO + 5'-deoxyadenosine + formate + L-methionine + 3 H(+). The protein operates within cofactor biosynthesis; thiamine diphosphate biosynthesis. Catalyzes the synthesis of the hydroxymethylpyrimidine phosphate (HMP-P) moiety of thiamine from aminoimidazole ribotide (AIR) in a radical S-adenosyl-L-methionine (SAM)-dependent reaction. The polypeptide is Phosphomethylpyrimidine synthase (Thermus thermophilus (strain ATCC BAA-163 / DSM 7039 / HB27)).